A 179-amino-acid chain; its full sequence is Ribosome maturation factor RimM (179 aa).

The 77-residue stretch at 100 to 176 folds into the PRC barrel domain; that stretch reads HGEYHLTELI…FILLTPPSGL (77 aa).

The protein belongs to the RimM family. Binds ribosomal protein uS19.

It is found in the cytoplasm. In terms of biological role, an accessory protein needed during the final step in the assembly of 30S ribosomal subunit, possibly for assembly of the head region. Essential for efficient processing of 16S rRNA. May be needed both before and after RbfA during the maturation of 16S rRNA. It has affinity for free ribosomal 30S subunits but not for 70S ribosomes. This Prochlorococcus marinus subsp. pastoris (strain CCMP1986 / NIES-2087 / MED4) protein is Ribosome maturation factor RimM.